A 179-amino-acid chain; its full sequence is Protein GrpE (179 aa).

Residues 1–22 (MTDNNIENNEEEIRKAPSANDR) form a disordered region. A compositionally biased stretch (basic and acidic residues) spans 11–22 (EEIRKAPSANDR).

This sequence belongs to the GrpE family. In terms of assembly, homodimer.

It localises to the cytoplasm. Functionally, participates actively in the response to hyperosmotic and heat shock by preventing the aggregation of stress-denatured proteins, in association with DnaK and GrpE. It is the nucleotide exchange factor for DnaK and may function as a thermosensor. Unfolded proteins bind initially to DnaJ; upon interaction with the DnaJ-bound protein, DnaK hydrolyzes its bound ATP, resulting in the formation of a stable complex. GrpE releases ADP from DnaK; ATP binding to DnaK triggers the release of the substrate protein, thus completing the reaction cycle. Several rounds of ATP-dependent interactions between DnaJ, DnaK and GrpE are required for fully efficient folding. This Rickettsia canadensis (strain McKiel) protein is Protein GrpE.